The chain runs to 208 residues: MKVIEVKHPLVKHKLGLMREADISTKRFRELAKEVGSLLTYEATSDFETEKVTIDGWNGPVEVDQIKGKKVTVVPILRAGLGMMDGVLEHMPSARVSVVGIYRDEETLQPVPYFQKIVSNIDERLALIVDPMLATGGSMIATIDLLKQKGCKQIKVIVLVAAPEGLAALQAAHDDVEVYCASIDQGLNEKGYIIPGLGDAGDKIFGTK.

Residues Arg-78, Arg-103, and 130–138 (DPMLATGGS) each bind 5-phospho-alpha-D-ribose 1-diphosphate. Uracil is bound by residues Ile-193 and 198–200 (GDA). Residue Asp-199 participates in 5-phospho-alpha-D-ribose 1-diphosphate binding.

This sequence belongs to the UPRTase family. Mg(2+) is required as a cofactor.

The catalysed reaction is UMP + diphosphate = 5-phospho-alpha-D-ribose 1-diphosphate + uracil. The protein operates within pyrimidine metabolism; UMP biosynthesis via salvage pathway; UMP from uracil: step 1/1. Its activity is regulated as follows. Allosterically activated by GTP. Its function is as follows. Catalyzes the conversion of uracil and 5-phospho-alpha-D-ribose 1-diphosphate (PRPP) to UMP and diphosphate. The protein is Uracil phosphoribosyltransferase of Tolumonas auensis (strain DSM 9187 / NBRC 110442 / TA 4).